The primary structure comprises 386 residues: DNA replication and repair protein RecF (386 aa).

An ATP-binding site is contributed by 30-37 (GANAQGKT).

It belongs to the RecF family.

It localises to the cytoplasm. The RecF protein is involved in DNA metabolism; it is required for DNA replication and normal SOS inducibility. RecF binds preferentially to single-stranded, linear DNA. It also seems to bind ATP. In Natranaerobius thermophilus (strain ATCC BAA-1301 / DSM 18059 / JW/NM-WN-LF), this protein is DNA replication and repair protein RecF.